The sequence spans 209 residues: Dual-specificity protein phosphatase SDP1 (209 aa).

Over residues 1–11 the composition is skewed to polar residues; it reads MNIYTSPTRTP. The interval 1–43 is disordered; the sequence is MNIYTSPTRTPNIAPKSGQRPSLPMLATDERSTDKESPNEDRE. Over residues 28–43 the composition is skewed to basic and acidic residues; the sequence is TDERSTDKESPNEDRE. A disulfide bridge links C47 with C142. A Tyrosine-protein phosphatase domain is found at 59–196; it reads GPLLVLPEKI…LMEWEVALNA (138 aa). Residue H111 coordinates 4-O-phospho-L-tyrosine. C140 (phosphocysteine intermediate) is an active-site residue.

It belongs to the protein-tyrosine phosphatase family. Non-receptor class dual specificity subfamily.

The catalysed reaction is O-phospho-L-tyrosyl-[protein] + H2O = L-tyrosyl-[protein] + phosphate. Its function is as follows. Mediates dephosphorylation of MAPK substrates such as SLT2, acquiring enhanced catalytic activity under oxidative conditions. This chain is Dual-specificity protein phosphatase SDP1 (SDP1), found in Saccharomyces cerevisiae (strain ATCC 204508 / S288c) (Baker's yeast).